The chain runs to 195 residues: 3-isopropylmalate dehydratase small subunit (195 aa).

This sequence belongs to the LeuD family. LeuD type 1 subfamily. Heterodimer of LeuC and LeuD.

It catalyses the reaction (2R,3S)-3-isopropylmalate = (2S)-2-isopropylmalate. It functions in the pathway amino-acid biosynthesis; L-leucine biosynthesis; L-leucine from 3-methyl-2-oxobutanoate: step 2/4. Catalyzes the isomerization between 2-isopropylmalate and 3-isopropylmalate, via the formation of 2-isopropylmaleate. The chain is 3-isopropylmalate dehydratase small subunit from Salinispora arenicola (strain CNS-205).